The following is a 249-amino-acid chain: Isoprenyl transferase (249 aa).

Residue Asp25 is part of the active site. Asp25 is a Mg(2+) binding site. Residues 26–29, Trp30, Arg38, His42, and 70–72 each bind substrate; these read GNGR and STE. Asn73 serves as the catalytic Proton acceptor. Substrate contacts are provided by residues Trp74, Arg76, Arg197, and 203 to 205; that span reads RLS. Glu216 is a binding site for Mg(2+).

Belongs to the UPP synthase family. In terms of assembly, homodimer. Mg(2+) is required as a cofactor.

Functionally, catalyzes the condensation of isopentenyl diphosphate (IPP) with allylic pyrophosphates generating different type of terpenoids. The chain is Isoprenyl transferase from Streptococcus thermophilus (strain CNRZ 1066).